A 296-amino-acid chain; its full sequence is Phosphatidylserine decarboxylase proenzyme (296 aa).

Catalysis depends on charge relay system; for autoendoproteolytic cleavage activity residues aspartate 113, histidine 169, and serine 256. Serine 256 serves as the catalytic Schiff-base intermediate with substrate; via pyruvic acid; for decarboxylase activity. Position 256 is a pyruvic acid (Ser); by autocatalysis (serine 256).

This sequence belongs to the phosphatidylserine decarboxylase family. PSD-B subfamily. Prokaryotic type II sub-subfamily. Heterodimer of a large membrane-associated beta subunit and a small pyruvoyl-containing alpha subunit. The cofactor is pyruvate. In terms of processing, is synthesized initially as an inactive proenzyme. Formation of the active enzyme involves a self-maturation process in which the active site pyruvoyl group is generated from an internal serine residue via an autocatalytic post-translational modification. Two non-identical subunits are generated from the proenzyme in this reaction, and the pyruvate is formed at the N-terminus of the alpha chain, which is derived from the carboxyl end of the proenzyme. The autoendoproteolytic cleavage occurs by a canonical serine protease mechanism, in which the side chain hydroxyl group of the serine supplies its oxygen atom to form the C-terminus of the beta chain, while the remainder of the serine residue undergoes an oxidative deamination to produce ammonia and the pyruvoyl prosthetic group on the alpha chain. During this reaction, the Ser that is part of the protease active site of the proenzyme becomes the pyruvoyl prosthetic group, which constitutes an essential element of the active site of the mature decarboxylase.

It is found in the cell membrane. It carries out the reaction a 1,2-diacyl-sn-glycero-3-phospho-L-serine + H(+) = a 1,2-diacyl-sn-glycero-3-phosphoethanolamine + CO2. The protein operates within phospholipid metabolism; phosphatidylethanolamine biosynthesis; phosphatidylethanolamine from CDP-diacylglycerol: step 2/2. Catalyzes the formation of phosphatidylethanolamine (PtdEtn) from phosphatidylserine (PtdSer). The sequence is that of Phosphatidylserine decarboxylase proenzyme from Clostridium beijerinckii (strain ATCC 51743 / NCIMB 8052) (Clostridium acetobutylicum).